Reading from the N-terminus, the 210-residue chain is Thiamine-phosphate synthase (210 aa).

4-amino-2-methyl-5-(diphosphooxymethyl)pyrimidine is bound by residues 39–43 (QLREK) and Asn71. The Mg(2+) site is built by Asp72 and Asp91. Position 110 (Ser110) interacts with 4-amino-2-methyl-5-(diphosphooxymethyl)pyrimidine. Residue 134–136 (TPT) coordinates 2-[(2R,5Z)-2-carboxy-4-methylthiazol-5(2H)-ylidene]ethyl phosphate. Lys137 contributes to the 4-amino-2-methyl-5-(diphosphooxymethyl)pyrimidine binding site. Gly163 lines the 2-[(2R,5Z)-2-carboxy-4-methylthiazol-5(2H)-ylidene]ethyl phosphate pocket.

This sequence belongs to the thiamine-phosphate synthase family. It depends on Mg(2+) as a cofactor.

It carries out the reaction 2-[(2R,5Z)-2-carboxy-4-methylthiazol-5(2H)-ylidene]ethyl phosphate + 4-amino-2-methyl-5-(diphosphooxymethyl)pyrimidine + 2 H(+) = thiamine phosphate + CO2 + diphosphate. It catalyses the reaction 2-(2-carboxy-4-methylthiazol-5-yl)ethyl phosphate + 4-amino-2-methyl-5-(diphosphooxymethyl)pyrimidine + 2 H(+) = thiamine phosphate + CO2 + diphosphate. The catalysed reaction is 4-methyl-5-(2-phosphooxyethyl)-thiazole + 4-amino-2-methyl-5-(diphosphooxymethyl)pyrimidine + H(+) = thiamine phosphate + diphosphate. Its pathway is cofactor biosynthesis; thiamine diphosphate biosynthesis; thiamine phosphate from 4-amino-2-methyl-5-diphosphomethylpyrimidine and 4-methyl-5-(2-phosphoethyl)-thiazole: step 1/1. Its function is as follows. Condenses 4-methyl-5-(beta-hydroxyethyl)thiazole monophosphate (THZ-P) and 2-methyl-4-amino-5-hydroxymethyl pyrimidine pyrophosphate (HMP-PP) to form thiamine monophosphate (TMP). The polypeptide is Thiamine-phosphate synthase (Campylobacter jejuni (strain RM1221)).